Reading from the N-terminus, the 113-residue chain is UPF0122 protein SSU98_0878 (113 aa).

Belongs to the UPF0122 family.

Its function is as follows. Might take part in the signal recognition particle (SRP) pathway. This is inferred from the conservation of its genetic proximity to ftsY/ffh. May be a regulatory protein. The protein is UPF0122 protein SSU98_0878 of Streptococcus suis (strain 98HAH33).